Reading from the N-terminus, the 276-residue chain is Vitamin B12-binding protein (276 aa).

The first 20 residues, 1-20 (MIVRFLCWLTGLLLCTAAYA), serve as a signal peptide directing secretion. Residues 24–273 (RVISLAPHAT…QLTALSPGSS (250 aa)) form the Fe/B12 periplasmic-binding domain. Cysteines 186 and 262 form a disulfide.

This sequence belongs to the BtuF family. As to quaternary structure, the complex is composed of two ATP-binding proteins (BtuD), two transmembrane proteins (BtuC) and a solute-binding protein (BtuF).

The protein localises to the periplasm. In terms of biological role, part of the ABC transporter complex BtuCDF involved in vitamin B12 import. Binds vitamin B12 and delivers it to the periplasmic surface of BtuC. This chain is Vitamin B12-binding protein, found in Pectobacterium carotovorum subsp. carotovorum (strain PC1).